The following is a 453-amino-acid chain: MKLLSRAGSFSRFYSLKVAPKVKTSAAPGGVPLQPQDLEFTKLPNGLVIASLENYAPLSRIGLFVKAGSRYEDSNNLGTSHLLRLASSLTTKGASSFKITRGIEAVGGKLSVTATRENMAYTVEGIRSDIEILMEFLLNVTTAPEFRRWEVAALRSQLKIDKAVAFQNSQTRIIENLHDVAYKNALANPLYCPDYRMGKITSEELHYFVQNHFTSARMALVGLGVSHSVLKQVAEQFLNMRGGLGLAGAKAKYRGGEIREQNGDNLVHAAIVAESAAIGNAEANAFSVLQHLLGAGPHIKRGNNTTSLLSQSVAKGSHQPFDVSAFNASYSDSGLFGIYTISQAAAAGEVINAAYNQVKAVAQGNLSSADVQAAKNKLKAGYLMSVETSEGFLSEIGSQALAAGSYMPPSTVLQQIDSVADADVVKAAKKFVSGKKSMAASGNLGHTPFLDEL.

Residues Met1–Tyr14 constitute a mitochondrion transit peptide. 3 positions are modified to N6-acetyllysine: Lys66, Lys199, and Lys250. Ser368 is subject to Phosphoserine.

Belongs to the peptidase M16 family. UQCRC2/QCR2 subfamily. As to quaternary structure, component of the ubiquinol-cytochrome c oxidoreductase (cytochrome b-c1 complex, complex III, CIII), a multisubunit enzyme composed of 11 subunits. The complex is composed of 3 respiratory subunits cytochrome b, cytochrome c1 and Rieske protein UQCRFS1, 2 core protein subunits UQCRC1/QCR1 and UQCRC2/QCR2, and 6 low-molecular weight protein subunits UQCRH/QCR6, UQCRB/QCR7, UQCRQ/QCR8, UQCR10/QCR9, UQCR11/QCR10 and subunit 9, the cleavage product of Rieske protein UQCRFS1. The complex exists as an obligatory dimer and forms supercomplexes (SCs) in the inner mitochondrial membrane with NADH-ubiquinone oxidoreductase (complex I, CI) and cytochrome c oxidase (complex IV, CIV), resulting in different assemblies (supercomplex SCI(1)III(2)IV(1) and megacomplex MCI(2)III(2)IV(2)). Interacts with RAB5IF. Interacts with STMP1. In terms of processing, acetylation of Lys-159 and Lys-250 is observed in liver mitochondria from fasted mice but not from fed mice. Expressed in neurons and astrocytes of the cerebral cortex and hippocampus (at protein level).

Its subcellular location is the mitochondrion inner membrane. Functionally, component of the ubiquinol-cytochrome c oxidoreductase, a multisubunit transmembrane complex that is part of the mitochondrial electron transport chain which drives oxidative phosphorylation. The respiratory chain contains 3 multisubunit complexes succinate dehydrogenase (complex II, CII), ubiquinol-cytochrome c oxidoreductase (cytochrome b-c1 complex, complex III, CIII) and cytochrome c oxidase (complex IV, CIV), that cooperate to transfer electrons derived from NADH and succinate to molecular oxygen, creating an electrochemical gradient over the inner membrane that drives transmembrane transport and the ATP synthase. The cytochrome b-c1 complex catalyzes electron transfer from ubiquinol to cytochrome c, linking this redox reaction to translocation of protons across the mitochondrial inner membrane, with protons being carried across the membrane as hydrogens on the quinol. In the process called Q cycle, 2 protons are consumed from the matrix, 4 protons are released into the intermembrane space and 2 electrons are passed to cytochrome c. The 2 core subunits UQCRC1/QCR1 and UQCRC2/QCR2 are homologous to the 2 mitochondrial-processing peptidase (MPP) subunits beta-MPP and alpha-MPP respectively, and they seem to have preserved their MPP processing properties. May be involved in the in situ processing of UQCRFS1 into the mature Rieske protein and its mitochondrial targeting sequence (MTS)/subunit 9 when incorporated into complex III. The chain is Cytochrome b-c1 complex subunit 2, mitochondrial (Uqcrc2) from Mus musculus (Mouse).